The following is a 108-amino-acid chain: MSRVSEYGVPEGVRESDSDTDSVFMYQHTELMQNNASPLVVQTRPPAVLIPLVDVPRPRSRRKASAQLKMQMDRLCNVLGVVLQMATLALVTYIAFVVHTRATSCKRE.

Residues 1–20 are disordered; that stretch reads MSRVSEYGVPEGVRESDSDT. Residues 1 to 77 are Intravirion-facing; that stretch reads MSRVSEYGVP…LKMQMDRLCN (77 aa). A helical; Signal-anchor for type II membrane protein membrane pass occupies residues 78 to 98; it reads VLGVVLQMATLALVTYIAFVV. Residues 99–108 are Virion surface-facing; it reads HTRATSCKRE.

It belongs to the varicellovirus ORF1 protein family. In terms of assembly, homodimer. Post-translationally, phosphorylated.

The protein localises to the virion membrane. The protein resides in the host Golgi apparatus membrane. This chain is Structural protein 1, found in Varicella-zoster virus (strain Dumas) (HHV-3).